Reading from the N-terminus, the 279-residue chain is Energy-coupling factor transporter ATP-binding protein EcfA1 (279 aa).

The ABC transporter domain maps to 6–240 (VEFRNVSFRY…KDALREIGLD (235 aa)). 40-47 (GHNGSGKS) provides a ligand contact to ATP.

It belongs to the ABC transporter superfamily. Energy-coupling factor EcfA family. Forms a stable energy-coupling factor (ECF) transporter complex composed of 2 membrane-embedded substrate-binding proteins (S component), 2 ATP-binding proteins (A component) and 2 transmembrane proteins (T component).

The protein localises to the cell membrane. Functionally, ATP-binding (A) component of a common energy-coupling factor (ECF) ABC-transporter complex. Unlike classic ABC transporters this ECF transporter provides the energy necessary to transport a number of different substrates. The sequence is that of Energy-coupling factor transporter ATP-binding protein EcfA1 from Oceanobacillus iheyensis (strain DSM 14371 / CIP 107618 / JCM 11309 / KCTC 3954 / HTE831).